The primary structure comprises 256 residues: Putative adhesin P1-like protein MPN_132 (256 aa).

Low complexity predominate over residues 56–72 (AVSESQAATSSTTTTAT). Disordered stretches follow at residues 56–115 (AVSE…PYLH) and 149–235 (FGTD…EVVG). Positions 96–112 (KASTQGSGQTNSQNTSP) are enriched in polar residues. Low complexity-rich tracts occupy residues 155 to 179 (TQPQ…LGSV) and 211 to 222 (STSDGNTSSTNN).

Belongs to the adhesin P1 family.

The chain is Putative adhesin P1-like protein MPN_132 from Mycoplasma pneumoniae (strain ATCC 29342 / M129 / Subtype 1) (Mycoplasmoides pneumoniae).